The following is a 367-amino-acid chain: 3-dehydroquinate synthase (367 aa).

NAD(+) is bound by residues 112–116 (GVIGD), 136–137 (TT), Lys149, Lys158, and 176–179 (TLKT). 3 residues coordinate Zn(2+): Glu191, His256, and His273.

This sequence belongs to the sugar phosphate cyclases superfamily. Dehydroquinate synthase family. It depends on NAD(+) as a cofactor. Co(2+) serves as cofactor. Requires Zn(2+) as cofactor.

It localises to the cytoplasm. It catalyses the reaction 7-phospho-2-dehydro-3-deoxy-D-arabino-heptonate = 3-dehydroquinate + phosphate. It functions in the pathway metabolic intermediate biosynthesis; chorismate biosynthesis; chorismate from D-erythrose 4-phosphate and phosphoenolpyruvate: step 2/7. Catalyzes the conversion of 3-deoxy-D-arabino-heptulosonate 7-phosphate (DAHP) to dehydroquinate (DHQ). This is 3-dehydroquinate synthase from Prochlorococcus marinus (strain SARG / CCMP1375 / SS120).